The sequence spans 334 residues: S-adenosylmethionine:tRNA ribosyltransferase-isomerase (334 aa).

Belongs to the QueA family. In terms of assembly, monomer.

The protein resides in the cytoplasm. It carries out the reaction 7-aminomethyl-7-carbaguanosine(34) in tRNA + S-adenosyl-L-methionine = epoxyqueuosine(34) in tRNA + adenine + L-methionine + 2 H(+). The protein operates within tRNA modification; tRNA-queuosine biosynthesis. In terms of biological role, transfers and isomerizes the ribose moiety from AdoMet to the 7-aminomethyl group of 7-deazaguanine (preQ1-tRNA) to give epoxyqueuosine (oQ-tRNA). The polypeptide is S-adenosylmethionine:tRNA ribosyltransferase-isomerase (Aquifex aeolicus (strain VF5)).